The sequence spans 195 residues: Protein GrpE (195 aa).

Belongs to the GrpE family. As to quaternary structure, homodimer.

It is found in the cytoplasm. In terms of biological role, participates actively in the response to hyperosmotic and heat shock by preventing the aggregation of stress-denatured proteins, in association with DnaK and GrpE. It is the nucleotide exchange factor for DnaK and may function as a thermosensor. Unfolded proteins bind initially to DnaJ; upon interaction with the DnaJ-bound protein, DnaK hydrolyzes its bound ATP, resulting in the formation of a stable complex. GrpE releases ADP from DnaK; ATP binding to DnaK triggers the release of the substrate protein, thus completing the reaction cycle. Several rounds of ATP-dependent interactions between DnaJ, DnaK and GrpE are required for fully efficient folding. The polypeptide is Protein GrpE (Blochmanniella floridana).